Here is a 718-residue protein sequence, read N- to C-terminus: Interleukin-1 receptor-associated kinase 1 (718 aa).

Positions 27-106 (MCRFYKVMDA…DIITAWHPPA (80 aa)) constitute a Death domain. Thr-66 bears the Phosphothreonine; by PKC/PRKCI mark. Positions 110–211 (PPSTTSLTPS…LHEICQGTHD (102 aa)) are proST region. Lys-134 is covalently cross-linked (Glycyl lysine isopeptide (Lys-Gly) (interchain with G-Cter in ubiquitin)). The interval 146–188 (AFPGSQTHSDPELCPGPSPAAHQPPLPSPAPSSTKPSPESPMS) is disordered. The span at 159-175 (CPGPSPAAHQPPLPSPA) shows a compositional bias: pro residues. The span at 176–188 (PSSTKPSPESPMS) shows a compositional bias: low complexity. A Glycyl lysine isopeptide (Lys-Gly) (interchain with G-Cter in ubiquitin) cross-link involves residue Lys-180. Position 209 is a phosphothreonine; by IRAK4 (Thr-209). Residues 212 to 521 (FSEELKIGEG…TQVYQTLEEL (310 aa)) enclose the Protein kinase domain. Residues 218-226 (IGEGGFGCV) and Lys-239 contribute to the ATP site. Asp-340 acts as the Proton acceptor in catalysis. ATP is bound by residues 342–345 (KSSN) and Asp-358. Ser-375 carries the post-translational modification Phosphoserine. Position 387 is a phosphothreonine (Thr-387). Residues 534-554 (AASRSPPSPQENSYVSTSGSA) are disordered. The segment covering 543 to 554 (QENSYVSTSGSA) has biased composition (polar residues). Ser-556 carries the post-translational modification Phosphoserine. 3 disordered regions span residues 569-594 (GAQAQATDWPQKGANQPVESDESVSD), 631-662 (GAARESSCGSGPGLQPTAVEGPLLGSSMSSRP), and 692-718 (LSSSSLPDSGQDLQDRQGPEERDEFRS). Residues 692–703 (LSSSSLPDSGQD) show a composition bias toward low complexity. Basic and acidic residues predominate over residues 704-718 (LQDRQGPEERDEFRS).

The protein belongs to the protein kinase superfamily. TKL Ser/Thr protein kinase family. Pelle subfamily. As to quaternary structure, homodimer. Forms a complex with TRAF6, PELI1, IRAK4 and MYD88. Direct binding of SMAD6 to PELI1 prevents complex formation and hence negatively regulates IL1R-TLR signaling and eventually NF-kappa-B-mediated gene expression. The TRAF6-PELI1-IRAK1-IRAK4-MYD88 complex recruits MAP3K7/TAK1, TAB1 and TAB2 to mediate NF-kappa-B activation. Interaction with MYD88 recruits IRAK1 to the stimulated receptor complex. Interacts with TOLLIP; this interaction occurs in the cytosol prior to receptor activation. Interacts with IL1RL1. Interacts (when polyubiquitinated) with IKBKG/NEMO. Interacts with RSAD2/viperin. Interacts with IRAK1BP1. Interacts with PELI2. Interacts with ZC3H12A; this interaction increases the interaction between ZC3H12A and IKBKB/IKKB. Interacts with IRAK4. Interacts with PELI3. Interacts with PELI1 and TRAF6. Interacts with INAVA; the interaction takes place upon PRR stimulation. Interacts (via C-terminus) with NFATC4 (via N-terminus). Requires Mg(2+) as cofactor. Post-translationally, following recruitment on the activated receptor complex, phosphorylated on Thr-209, probably by IRAK4, resulting in a conformational change of the kinase domain, allowing further phosphorylations to take place. Thr-387 phosphorylation in the activation loop is required to achieve full enzymatic activity. In terms of processing, polyubiquitinated by TRAF6 after cell stimulation with IL-1-beta by PELI1, PELI2 and PELI3. Polyubiquitination occurs with polyubiquitin chains linked through 'Lys-63'. Ubiquitination promotes interaction with NEMO/IKBKG. Also sumoylated; leading to nuclear translocation.

The protein resides in the cytoplasm. Its subcellular location is the nucleus. It is found in the lipid droplet. It carries out the reaction L-seryl-[protein] + ATP = O-phospho-L-seryl-[protein] + ADP + H(+). The catalysed reaction is L-threonyl-[protein] + ATP = O-phospho-L-threonyl-[protein] + ADP + H(+). Serine/threonine-protein kinase that plays a critical role in initiating innate immune response against foreign pathogens. Involved in Toll-like receptor (TLR) and IL-1R signaling pathways. Is rapidly recruited by MYD88 to the receptor-signaling complex upon TLR activation. Association with MYD88 leads to IRAK1 phosphorylation by IRAK4 and subsequent autophosphorylation and kinase activation. Phosphorylates E3 ubiquitin ligases Pellino proteins (PELI1, PELI2 and PELI3) to promote pellino-mediated polyubiquitination of IRAK1. Then, the ubiquitin-binding domain of IKBKG/NEMO binds to polyubiquitinated IRAK1 bringing together the IRAK1-MAP3K7/TAK1-TRAF6 complex and the NEMO-IKKA-IKKB complex. In turn, MAP3K7/TAK1 activates IKKs (CHUK/IKKA and IKBKB/IKKB) leading to NF-kappa-B nuclear translocation and activation. Alternatively, phosphorylates TIRAP to promote its ubiquitination and subsequent degradation. Phosphorylates the interferon regulatory factor 7 (IRF7) to induce its activation and translocation to the nucleus, resulting in transcriptional activation of type I IFN genes, which drive the cell in an antiviral state. When sumoylated, translocates to the nucleus and phosphorylates STAT3. The polypeptide is Interleukin-1 receptor-associated kinase 1 (IRAK1) (Bos taurus (Bovine)).